Consider the following 153-residue polypeptide: Protein SprT-like (153 aa).

The region spanning 6-148 (LQQLTEQLSL…CGKCGGKIKE (143 aa)) is the SprT-like domain. Zn(2+) is bound at residue H67. The active site involves E68. H71 serves as a coordination point for Zn(2+).

The protein belongs to the SprT family. Requires Zn(2+) as cofactor.

It localises to the cytoplasm. The polypeptide is Protein SprT-like (Bacillus licheniformis (strain ATCC 14580 / DSM 13 / JCM 2505 / CCUG 7422 / NBRC 12200 / NCIMB 9375 / NCTC 10341 / NRRL NRS-1264 / Gibson 46)).